The chain runs to 123 residues: Small ribosomal subunit protein uS12 (123 aa).

Aspartate 89 is modified (3-methylthioaspartic acid).

This sequence belongs to the universal ribosomal protein uS12 family. In terms of assembly, part of the 30S ribosomal subunit. Contacts proteins S8 and S17. May interact with IF1 in the 30S initiation complex.

In terms of biological role, with S4 and S5 plays an important role in translational accuracy. Its function is as follows. Interacts with and stabilizes bases of the 16S rRNA that are involved in tRNA selection in the A site and with the mRNA backbone. Located at the interface of the 30S and 50S subunits, it traverses the body of the 30S subunit contacting proteins on the other side and probably holding the rRNA structure together. The combined cluster of proteins S8, S12 and S17 appears to hold together the shoulder and platform of the 30S subunit. In Geobacter metallireducens (strain ATCC 53774 / DSM 7210 / GS-15), this protein is Small ribosomal subunit protein uS12.